The following is an 825-amino-acid chain: Phenylalanine--tRNA ligase beta subunit (825 aa).

One can recognise a tRNA-binding domain in the interval 39 to 154 (RTWADGVVLG…EAHPLGSDVR (116 aa)). The region spanning 411 to 506 (PLERTLKLRL…RLYGYDRFSE (96 aa)) is the B5 domain. Residues D484, D490, E493, and E494 each coordinate Mg(2+). In terms of domain architecture, FDX-ACB spans 731-824 (SPFPAADRDI…LATQFPVTLR (94 aa)).

The protein belongs to the phenylalanyl-tRNA synthetase beta subunit family. Type 1 subfamily. In terms of assembly, tetramer of two alpha and two beta subunits. Mg(2+) serves as cofactor.

It is found in the cytoplasm. It catalyses the reaction tRNA(Phe) + L-phenylalanine + ATP = L-phenylalanyl-tRNA(Phe) + AMP + diphosphate + H(+). The protein is Phenylalanine--tRNA ligase beta subunit of Synechococcus sp. (strain JA-2-3B'a(2-13)) (Cyanobacteria bacterium Yellowstone B-Prime).